Reading from the N-terminus, the 712-residue chain is Cyclolysin secretion/processing ATP-binding protein CyaB (712 aa).

Residues 7 to 128 enclose the Peptidase C39 domain; that stretch reads QCASVPDSGL…ALWAGELLLC (122 aa). An ABC transmembrane type-1 domain is found at 157–439; it reads IGEVLLISLV…LAQLWNDFQQ (283 aa). Helical transmembrane passes span 160-180, 194-214, 272-292, 298-318, 367-387, and 390-410; these read VLLI…FFQV, LNVI…LTGI, AVTV…MFFY, LVVL…TPVL, VAAG…VTLI, and LVAL…RMTV. The ABC transporter domain occupies 471–706; it reads IELDRVSFRY…GGLYARLQAL (236 aa). 505–512 contacts ATP; the sequence is GRSGSGKS.

It belongs to the ABC transporter superfamily. Cyclolysin exporter (TC 3.A.1.109.2) family.

The protein resides in the cell membrane. Its function is as follows. Involved in the export of calmodulin-sensitive adenylate cyclase-hemolysin (cyclolysin). In Bordetella pertussis (strain ATCC 9797 / DSM 5571 / CCUG 30873 / LMG 14455 / NCTC 10739 / 18323), this protein is Cyclolysin secretion/processing ATP-binding protein CyaB (cyaB).